Here is a 51-residue protein sequence, read N- to C-terminus: UPF0181 protein VVA0806 (51 aa).

The protein belongs to the UPF0181 family.

This Vibrio vulnificus (strain YJ016) protein is UPF0181 protein VVA0806.